We begin with the raw amino-acid sequence, 1359 residues long: Regulatory-associated protein of TOR 2 (1359 aa).

2 disordered regions span residues 17–64 and 782–819; these read SSAA…PQVA and SDNS…QHSD. A compositionally biased stretch (basic and acidic residues) spans 32-50; the sequence is HLVDDHLPVENGPDPRRDV. Positions 782-805 are enriched in polar residues; the sequence is SDNSATARDGRISTSSPIATNSIM. Over residues 806-819 the composition is skewed to low complexity; that stretch reads HGSPQSDDSSQHSD. 7 WD repeats span residues 1041–1080, 1087–1127, 1139–1178, 1181–1221, 1228–1269, 1273–1312, and 1321–1359; these read RFEL…PVNT, SDRG…GGQK, RSAG…VNTI, TADS…RLVY, PRSE…EPYL, AHRG…LTII, and QRIG…YQVR.

This sequence belongs to the WD repeat RAPTOR family. In terms of assembly, the target of rapamycin complex 1 (TORC1) is composed of at least RAPTOR, LST8 and TOR.

In terms of biological role, component of TORC1 complex, which is an essential cell growth regulator that controls plant development. Acts by recruiting substrates for TOR. Acts by activating transcription, protein synthesis and ribosome biogenesis, and inhibiting mRNA degradation and autophagy. The sequence is that of Regulatory-associated protein of TOR 2 (RAPTOR2) from Oryza sativa subsp. japonica (Rice).